Consider the following 447-residue polypeptide: Probable glycine dehydrogenase (decarboxylating) subunit 1 (447 aa).

It belongs to the GcvP family. N-terminal subunit subfamily. As to quaternary structure, the glycine cleavage system is composed of four proteins: P, T, L and H. In this organism, the P 'protein' is a heterodimer of two subunits.

The catalysed reaction is N(6)-[(R)-lipoyl]-L-lysyl-[glycine-cleavage complex H protein] + glycine + H(+) = N(6)-[(R)-S(8)-aminomethyldihydrolipoyl]-L-lysyl-[glycine-cleavage complex H protein] + CO2. Its function is as follows. The glycine cleavage system catalyzes the degradation of glycine. The P protein binds the alpha-amino group of glycine through its pyridoxal phosphate cofactor; CO(2) is released and the remaining methylamine moiety is then transferred to the lipoamide cofactor of the H protein. The polypeptide is Probable glycine dehydrogenase (decarboxylating) subunit 1 (Sulfolobus acidocaldarius (strain ATCC 33909 / DSM 639 / JCM 8929 / NBRC 15157 / NCIMB 11770)).